We begin with the raw amino-acid sequence, 26 residues long: ECKWYLGTCSKDGDCCKHLQCHSNYE.

Intrachain disulfides connect C2–C16 and C9–C21.

The protein belongs to the neurotoxin 10 (Hwtx-1) family. 17 (Hntx-9) subfamily. Expressed by the venom gland.

Its subcellular location is the secreted. Functionally, ion channel inhibitor. The sequence is that of Hainantoxin F1-31.97 from Cyriopagopus hainanus (Chinese bird spider).